The following is a 139-amino-acid chain: Holo-[acyl-carrier-protein] synthase (139 aa).

The Mg(2+) site is built by aspartate 8 and glutamate 57.

This sequence belongs to the P-Pant transferase superfamily. AcpS family. Mg(2+) serves as cofactor.

The protein resides in the cytoplasm. It carries out the reaction apo-[ACP] + CoA = holo-[ACP] + adenosine 3',5'-bisphosphate + H(+). Functionally, transfers the 4'-phosphopantetheine moiety from coenzyme A to a Ser of acyl-carrier-protein. This is Holo-[acyl-carrier-protein] synthase from Rhizobium meliloti (strain 1021) (Ensifer meliloti).